Consider the following 88-residue polypeptide: Small ribosomal subunit protein bS20 (88 aa).

Positions 69–88 (KNTASRKKSRLTKRFNKLTG) are disordered. Basic residues predominate over residues 71-88 (TASRKKSRLTKRFNKLTG).

Belongs to the bacterial ribosomal protein bS20 family.

Binds directly to 16S ribosomal RNA. The sequence is that of Small ribosomal subunit protein bS20 from Pelotomaculum thermopropionicum (strain DSM 13744 / JCM 10971 / SI).